The following is a 141-amino-acid chain: HTH-type transcriptional repressor NsrR (141 aa).

An HTH rrf2-type domain is found at Q2–E129. The segment at residues I28–R51 is a DNA-binding region (H-T-H motif). C91, C96, and C102 together coordinate [2Fe-2S] cluster.

The cofactor is [2Fe-2S] cluster.

Functionally, nitric oxide-sensitive repressor of genes involved in protecting the cell against nitrosative stress. May require iron for activity. This chain is HTH-type transcriptional repressor NsrR, found in Klebsiella pneumoniae subsp. pneumoniae (strain ATCC 700721 / MGH 78578).